The following is a 306-amino-acid chain: MNKIKCALIGPGNIGTDLLYKLKRSPVLEPVWMVGIDAASEGLARARELGLKTTADGVDGLLPHVKADGVQIAFDATSAYVHAENSRKLNELGVLMIDLTPAAIGPFCVPPVNLKDHVGRGEMNVNMVTCGGQATIPMVAAVSRVQPVKYGEIVATVSSKSAGPGTRKNIDEFTRTTAGAVEKVGGAKVGKAIIILNPAEPPLIMRDTVHCLTETEPDQQKITESIHAMIREVQKYVPGYKLVNGPVFDGNRVSIYLEVEGLGDYLPKYAGNLDIMTAAGARTAEMFAEEILAGRLTLESNRAVLA.

Cys130 acts as the Acyl-thioester intermediate in catalysis. NAD(+) is bound by residues 161–169 (SAGPGTRKN) and Asn272.

The protein belongs to the acetaldehyde dehydrogenase family.

It carries out the reaction acetaldehyde + NAD(+) + CoA = acetyl-CoA + NADH + H(+). This Azoarcus sp. (strain BH72) protein is Acetaldehyde dehydrogenase 2/3 (mhpF).